Reading from the N-terminus, the 179-residue chain is Large ribosomal subunit protein uL5 (179 aa).

Belongs to the universal ribosomal protein uL5 family. Part of the 50S ribosomal subunit; part of the 5S rRNA/L5/L18/L25 subcomplex. Contacts the 5S rRNA and the P site tRNA. Forms a bridge to the 30S subunit in the 70S ribosome.

This is one of the proteins that bind and probably mediate the attachment of the 5S RNA into the large ribosomal subunit, where it forms part of the central protuberance. In the 70S ribosome it contacts protein S13 of the 30S subunit (bridge B1b), connecting the 2 subunits; this bridge is implicated in subunit movement. Contacts the P site tRNA; the 5S rRNA and some of its associated proteins might help stabilize positioning of ribosome-bound tRNAs. The polypeptide is Large ribosomal subunit protein uL5 (Pseudomonas syringae pv. tomato (strain ATCC BAA-871 / DC3000)).